A 629-amino-acid polypeptide reads, in one-letter code: Methyl-accepting chemotaxis protein PscA (629 aa).

Residues 1 to 9 (MKNLGFSKK) lie on the Cytoplasmic side of the membrane. A helical membrane pass occupies residues 10–30 (ILLAAALIVVVAFSVFIVIND). Residues 31 to 276 (YRQRQSLKSS…AYAMLTEFRT (246 aa)) are Periplasmic-facing. Residues 36 to 258 (SLKSSVKSEL…QGVATANWYV (223 aa)) form the Cache domain. Residues 277–297 (SAITAMVVVVMVIILLLGPLI) traverse the membrane as a helical segment. The 55-residue stretch at 298–352 (RVLMQPLHQMGRAMRDIADGEGDLTKRLAITSHDEFGALAESFNHFVERIHTSIR) folds into the HAMP domain. The Cytoplasmic segment spans residues 298 to 629 (RVLMQPLHQM…LQQLVGSFRI (332 aa)). In terms of domain architecture, Methyl-accepting transducer spans 357–593 (TAAQLGEVAT…SINVDITHIN (237 aa)).

Belongs to the methyl-accepting chemotaxis (MCP) protein family.

The protein resides in the cell inner membrane. Functionally, chemotactic-signal transducers respond to changes in the concentration of attractants and repellents in the environment, transduce a signal from the outside to the inside of the cell, and facilitate sensory adaptation through the variation of the level of methylation. PscA recognizes specifically and with high affinity L-Asp, D-Asp and L-Glu. It exerts a double function, in mediating chemotaxis to these amino acids and in modulating cyclic di-GMP (c-di-GMP) levels, causing alterations in biofilm development. Plays a key role in the infection process. It may facilitate bacterial entry into the plant. This Pseudomonas syringae pv. tomato (strain ATCC BAA-871 / DC3000) protein is Methyl-accepting chemotaxis protein PscA.